Consider the following 319-residue polypeptide: Olfactory receptor 51F1 (319 aa).

At 1 to 37 (MLQNQDTMEILSNSTSKFPTFLLTGIPGLESAHVWIS) the chain is on the extracellular side. A helical membrane pass occupies residues 38 to 58 (IPFCCFYAIALSGNSVILFVI). Residues 59 to 75 (ITQQSLHEPMYYFLFRL) lie on the Cytoplasmic side of the membrane. Residues 76–96 (SATDLGLTVSSLSTTLGILWF) form a helical membrane-spanning segment. Residues 97 to 106 (EAREISLYSC) lie on the Extracellular side of the membrane. Cys106 and Cys188 are joined by a disulfide. The chain crosses the membrane as a helical span at residues 107-127 (IVQMFFLHGFTFMESGVLVAT). The Cytoplasmic portion of the chain corresponds to 128–149 (AFDRYVAICDPLRYTTILTNSR). The chain crosses the membrane as a helical span at residues 150-170 (IIQMGLLMITRAIVLILPLLL). The Extracellular portion of the chain corresponds to 171-211 (LLKPLYFCRMNALSHSYCYHPDVIQLACSDIRANSICGLID). A helical membrane pass occupies residues 212-232 (LILTTGIDTPCIVLSYILIIH). Residues 233–249 (SVLRIASPEEWHKVFST) lie on the Cytoplasmic side of the membrane. The helical transmembrane segment at 250 to 270 (CVSHVGAVAFFYIHMLSLSLV) threads the bilayer. Residues 271–279 (YRYGRSAPR) lie on the Extracellular side of the membrane. A helical transmembrane segment spans residues 280–300 (VVHSVMANVYLLLPPVLNPII). Residues 301–319 (DSVKTKQIRKAMLSLLLTK) lie on the Cytoplasmic side of the membrane.

Belongs to the G-protein coupled receptor 1 family.

Its subcellular location is the cell membrane. Odorant receptor. In Homo sapiens (Human), this protein is Olfactory receptor 51F1 (OR51F1).